The primary structure comprises 285 residues: GPN-loop GTPase 3 (285 aa).

13-18 contributes to the GTP binding site; it reads GSGKST. A Gly-Pro-Asn (GPN)-loop; involved in dimer interface motif is present at residues 70-72; sequence GPN. Residue 172 to 175 participates in GTP binding; that stretch reads TKID. The interval 253–276 is disordered; that stretch reads GEDLEPKEPPLENDDDDDDDEGDE. Residues 263–275 are compositionally biased toward acidic residues; it reads LENDDDDDDDEGD.

This sequence belongs to the GPN-loop GTPase family. In terms of assembly, heterodimer with gpn1. Binds to RNA polymerase II (RNAPII).

Small GTPase required for proper localization of RNA polymerase II (RNAPII). May act at an RNAP assembly step prior to nuclear import. The sequence is that of GPN-loop GTPase 3 (gpn3) from Dictyostelium discoideum (Social amoeba).